Reading from the N-terminus, the 222-residue chain is Uridine kinase (222 aa).

13–20 (GGSGAGKT) provides a ligand contact to ATP.

Belongs to the uridine kinase family.

It is found in the cytoplasm. The catalysed reaction is uridine + ATP = UMP + ADP + H(+). It catalyses the reaction cytidine + ATP = CMP + ADP + H(+). The protein operates within pyrimidine metabolism; CTP biosynthesis via salvage pathway; CTP from cytidine: step 1/3. It functions in the pathway pyrimidine metabolism; UMP biosynthesis via salvage pathway; UMP from uridine: step 1/1. The protein is Uridine kinase of Chlamydia pneumoniae (Chlamydophila pneumoniae).